We begin with the raw amino-acid sequence, 161 residues long: UPF0506 protein SJCHGC02965 (161 aa).

Residues 1–13 (QLLILCLVTVINS) form the signal peptide. Residues Asn-15, Asn-19, Asn-31, Asn-43, Asn-47, Asn-59, Asn-63, Asn-75, and Asn-121 are each glycosylated (N-linked (GlcNAc...) asparagine). Disulfide bonds link Cys-127/Cys-141, Cys-134/Cys-145, and Cys-140/Cys-150.

This sequence belongs to the UPF0506 family.

It localises to the secreted. The sequence is that of UPF0506 protein SJCHGC02965 from Schistosoma japonicum (Blood fluke).